Reading from the N-terminus, the 176-residue chain is Shikimate kinase (176 aa).

14–19 serves as a coordination point for ATP; that stretch reads GAGKST. Ser-18 is a Mg(2+) binding site. Substrate is bound by residues Asp-36, Arg-60, and Gly-83. Arg-121 serves as a coordination point for ATP. Arg-140 contacts substrate.

It belongs to the shikimate kinase family. In terms of assembly, monomer. It depends on Mg(2+) as a cofactor.

It localises to the cytoplasm. It carries out the reaction shikimate + ATP = 3-phosphoshikimate + ADP + H(+). The protein operates within metabolic intermediate biosynthesis; chorismate biosynthesis; chorismate from D-erythrose 4-phosphate and phosphoenolpyruvate: step 5/7. In terms of biological role, catalyzes the specific phosphorylation of the 3-hydroxyl group of shikimic acid using ATP as a cosubstrate. This chain is Shikimate kinase, found in Francisella tularensis subsp. holarctica (strain FTNF002-00 / FTA).